Here is a 514-residue protein sequence, read N- to C-terminus: Zinc finger CCCH-type with G patch domain-containing protein (514 aa).

Positions 96-129 are disordered; the sequence is GEEPQPPGAGDGASTGSKDSEEEEEEEDGSSGMK. A compositionally biased stretch (acidic residues) spans 115–124; sequence SEEEEEEEDG. The C3H1-type zinc finger occupies 171–197; the sequence is KAMKPCPFFLDGKCRFDDSCRFSHGQV. Disordered stretches follow at residues 262–288, 363–422, and 494–514; these read IPPL…AAED, QQRK…AAER, and EEHS…MTEF. The span at 272-287 shows a compositional bias: acidic residues; that stretch reads SSDDDDDDEEEDDAAE. The region spanning 315–373 is the G-patch domain; the sequence is TRGIGSKLLARMGYEIGKGLGRNAEGRVEPIQAVLLPKGKSLDQCIEMQQRKKAGGKRE. The span at 365-383 shows a compositional bias: basic residues; the sequence is RKKAGGKREHKAGKRRPRA.

The protein resides in the nucleus. Its function is as follows. Transcription repressor that specifically binds the 5'-GGAG[GA]A[GA]A-3' consensus sequence. Represses transcription by recruiting the chromatin multiprotein complex NuRD to target promoters. Negatively regulates expression of EGFR, a gene involved in cell proliferation, survival and migration. This is Zinc finger CCCH-type with G patch domain-containing protein (zgpat) from Xenopus tropicalis (Western clawed frog).